The sequence spans 57 residues: UPF0391 membrane protein IL0696 (57 aa).

The next 2 helical transmembrane spans lie at 4–24 (WVLI…GGIA) and 28–48 (AGIA…SLVV).

It belongs to the UPF0391 family.

It localises to the cell membrane. This Idiomarina loihiensis (strain ATCC BAA-735 / DSM 15497 / L2-TR) protein is UPF0391 membrane protein IL0696.